A 22-amino-acid polypeptide reads, in one-letter code: Mu-conotoxin MIIIA (22 aa).

Residue Gln1 is modified to Pyrrolidone carboxylic acid. Disulfide bonds link Cys3–Cys15, Cys4–Cys21, and Cys10–Cys22. Cys22 carries the post-translational modification Cysteine amide.

It belongs to the conotoxin M superfamily. As to expression, expressed by the venom duct.

It localises to the secreted. In terms of biological role, mu-conotoxins block voltage-gated sodium channels (Nav). This synthetic toxin potently blocks rNav1.3/SCN3A. It also moderately blocks rNav1.1/SCN1A, rNav1.2/SCN2A, rNav1.4/SCN4A, mNav1.6/SCN8A, and Nav1.7/SCN9A. sodium channels. This block is very slowly reversible. This chain is Mu-conotoxin MIIIA, found in Conus magus (Magical cone).